Reading from the N-terminus, the 81-residue chain is Exodeoxyribonuclease 7 small subunit (81 aa).

This sequence belongs to the XseB family. Heterooligomer composed of large and small subunits.

It localises to the cytoplasm. It carries out the reaction Exonucleolytic cleavage in either 5'- to 3'- or 3'- to 5'-direction to yield nucleoside 5'-phosphates.. Functionally, bidirectionally degrades single-stranded DNA into large acid-insoluble oligonucleotides, which are then degraded further into small acid-soluble oligonucleotides. The polypeptide is Exodeoxyribonuclease 7 small subunit (Pasteurella multocida (strain Pm70)).